The sequence spans 270 residues: Zinc finger protein ZAT2 (270 aa).

Polar residues-rich tracts occupy residues 1–28 (MSNTSNSDPNSDIPFASSNVTLPSYNQN) and 36–48 (LTNNEVGSSSSSP). Residues 1 to 64 (MSNTSNSDPN…QPDPDASQIA (64 aa)) are disordered. Residues 65 to 87 (RPCTECGKQFGSLKALFGHMRCH) form a C2H2-type 1 zinc finger. The tract at residues 95 to 119 (INPPSNFKRRINSNAASSSSSWDPS) is disordered. Residues 106–115 (NSNAASSSSS) are compositionally biased toward low complexity. 2 consecutive C2H2-type zinc fingers follow at residues 148–170 (FECDGCKKVFGSHQALGGHRATH) and 211–233 (HRCNICSRVFSSGQALGGHMRCH).

Interacts (via the EAR motif) with TPL. Expressed exclusively in pollen.

It is found in the nucleus. Mediates the regulation of male germ cell division by DUO1. In Arabidopsis thaliana (Mouse-ear cress), this protein is Zinc finger protein ZAT2.